We begin with the raw amino-acid sequence, 412 residues long: MTNKKELKDVQVKGKKVLVRVDFNVPMKDGQVTDDNRIIAALPTIKYLIAQEAKVILFSHLGKVKTADDLEKRDMAPVAKVLEQKLGQPVKFINAFEGKQLEEAINEMHNKEVILFQNTRFADIINSNGQISVDSEGKAAAKRESKNDSALGKYWASLGDVFVNDAFGTAHRAHASNVGIAENITESCLGFLVEKEVKMLSQCVDNPVKPFVAIIGGAKVSDKIGVIEHLLTKADKILIGGGMAYTFFAAQGHKIGNSLLEVDKVEIAKTFLAKGQGKIILPIDALEAPEFADVPAKVTTGFDIDDGYMGLDIGPKTIELFKKELADAKTVTWNGPMGVFEFKNYSIGTKAVCEAIAELKGAFTLIGGGDSAAAAIQLGYKDKFTHISTGGGASLEYMEGKPLPGIEAVQSK.

Substrate contacts are provided by residues 22-24 (DFN), R37, 60-63 (HLGK), R120, and R172. ATP is bound by residues K223, G310, E341, and 368–371 (GGDS).

Belongs to the phosphoglycerate kinase family. Monomer.

It localises to the cytoplasm. The catalysed reaction is (2R)-3-phosphoglycerate + ATP = (2R)-3-phospho-glyceroyl phosphate + ADP. It functions in the pathway carbohydrate degradation; glycolysis; pyruvate from D-glyceraldehyde 3-phosphate: step 2/5. The sequence is that of Phosphoglycerate kinase from Spiroplasma citri.